A 766-amino-acid chain; its full sequence is Deoxynucleotidyltransferase terminal-interacting protein 2 (766 aa).

A disordered region spans residues 1–99 (MVVTRSARPQ…DCSSVPEVQD (99 aa)). 2 stretches are compositionally biased toward polar residues: residues 13–28 (NEAT…NSAV) and 42–56 (SPDN…TTPE). Threonine 127 carries the post-translational modification Phosphothreonine. Residues serine 139, serine 143, and serine 146 each carry the phosphoserine modification. A disordered region spans residues 155–175 (TEITTRRSKAKSQREPKQESH). The segment covering 166-175 (SQREPKQESH) has biased composition (basic and acidic residues). Phosphoserine occurs at positions 180 and 190. A Glycyl lysine isopeptide (Lys-Gly) (interchain with G-Cter in SUMO2) cross-link involves residue lysine 217. A Phosphothreonine modification is found at threonine 229. Phosphoserine is present on residues serine 236, serine 248, and serine 250. Lysine 254 is covalently cross-linked (Glycyl lysine isopeptide (Lys-Gly) (interchain with G-Cter in SUMO2)). Serine 258 is subject to Phosphoserine. Lysine 327 is covalently cross-linked (Glycyl lysine isopeptide (Lys-Gly) (interchain with G-Cter in SUMO2)). Serine 334 carries the phosphoserine modification. 3 disordered regions span residues 345-367 (VSQR…LNHE), 390-450 (KNAI…KDDS), and 520-557 (KAGE…DEDN). Residue lysine 394 forms a Glycyl lysine isopeptide (Lys-Gly) (interchain with G-Cter in SUMO2) linkage. Positions 421-434 (DMSKEKEVDSESDT) are enriched in basic and acidic residues. Over residues 435–444 (KPSNLEFNTT) the composition is skewed to polar residues. Positions 515-552 (LDEEDKAGEVATEEEEEEEEEESEEELSDHDRNKDNEF) form a coiled coil. Residues 520 to 542 (KAGEVATEEEEEEEEEESEEELS) show a composition bias toward acidic residues. The tract at residues 558–615 (LLSNTKSKLLKLMSSSIDTGLNIKELGGLYINFNADKVQLNKRTLTQMKEKRKDELLQ) is tdBR region; mediates interaction with DNTT. Glycyl lysine isopeptide (Lys-Gly) (interchain with G-Cter in SUMO2) cross-links involve residues lysine 568, lysine 594, and lysine 616. Threonine 620 bears the Phosphothreonine mark. Residues lysine 636, lysine 659, lysine 668, lysine 696, and lysine 741 each participate in a glycyl lysine isopeptide (Lys-Gly) (interchain with G-Cter in SUMO2) cross-link.

As to quaternary structure, forms a ternary complex with DNTT and core histone; interaction with PCNA releases DNTT and H2A/H2B histones from this ternary complex. Interacts with ESR1, ESR2, PPARG and RXRA. Part of the small subunit (SSU) processome, composed of more than 70 proteins and the RNA chaperone small nucleolar RNA (snoRNA) U3.

The protein localises to the nucleus. The protein resides in the nucleolus. Its function is as follows. Regulates the transcriptional activity of DNTT and ESR1. May function as a chromatin remodeling protein. Part of the small subunit (SSU) processome, first precursor of the small eukaryotic ribosomal subunit. During the assembly of the SSU processome in the nucleolus, many ribosome biogenesis factors, an RNA chaperone and ribosomal proteins associate with the nascent pre-rRNA and work in concert to generate RNA folding, modifications, rearrangements and cleavage as well as targeted degradation of pre-ribosomal RNA by the RNA exosome. This chain is Deoxynucleotidyltransferase terminal-interacting protein 2 (DNTTIP2), found in Bos taurus (Bovine).